A 201-amino-acid polypeptide reads, in one-letter code: Putative manganese efflux pump MntP (201 aa).

The next 5 helical transmembrane spans lie at 6–26 (CLAV…ATGI), 39–59 (LAFH…TLGL), 105–125 (LTLI…GLSL), 127–147 (VLGI…LLFT), and 169–189 (LAGG…HGVF).

This sequence belongs to the MntP (TC 9.B.29) family.

The protein resides in the cell inner membrane. Functionally, probably functions as a manganese efflux pump. The polypeptide is Putative manganese efflux pump MntP (Nitratidesulfovibrio vulgaris (strain ATCC 29579 / DSM 644 / CCUG 34227 / NCIMB 8303 / VKM B-1760 / Hildenborough) (Desulfovibrio vulgaris)).